Consider the following 203-residue polypeptide: Cbp/p300-interacting transactivator 1 (203 aa).

Disordered stretches follow at residues 1-24 (MPTMSRPALDVKGGTTSGKEDANQ) and 51-86 (TANGAKANGVPTSSSGSTSPIGSPTATPSSKPPSFN). Low complexity predominate over residues 61-84 (PTSSSGSTSPIGSPTATPSSKPPS). Residues 168-177 (LMSLVVELGL) carry the Nuclear export signal motif.

It belongs to the CITED family. In terms of assembly, homodimer. Binds to RBM14. Interacts (via N-terminus) with HSPA8; the interaction suppresses the association of CITED1 with p300/CBP and SMAD-mediated transcription transactivation. Interacts (via C-terminus) with TOX3 (via HGM box); the interaction increases estrogen-response element (ERE)-dependent transcription and protection against cell death. Interacts with ESR1; the interaction occurs in a estrogen-dependent manner. Interacts (unphosphorylated form preferentially and via C-terminus) with EP300. Interacts (via C-terminus) with CREBBP. Interacts with EGR2. In terms of processing, phosphorylated. Phosphorylation changes in a cell cycle-dependent manner and reduces its transcriptional cofactor activity. As to expression, expressed in calvarial osteoblasts. Expressed in nulliparous mammary epithelial cells; absent in pregnant mice and in lacting mammary glands. Also expressed in mammary tumors (at protein level). Expressed only in melanocytes and testis. Expressed at high levels in the strongly pigmented melanoma cells but at low levels in the weakly pigmented cells.

The protein localises to the nucleus. The protein resides in the cytoplasm. Its function is as follows. Transcriptional coactivator of the p300/CBP-mediated transcription complex. Enhances SMAD-mediated transcription by strengthening the functional link between the DNA-binding SMAD transcription factors and the p300/CBP transcription coactivator complex. Stimulates estrogen-dependent transactivation activity mediated by estrogen receptors signaling; stabilizes the interaction of estrogen receptor ESR1 and histone acetyltransferase EP300. Positively regulates TGF-beta signaling through its association with the SMAD/p300/CBP-mediated transcriptional coactivator complex. Induces transcription from estrogen-responsive promoters and protection against cell death. Potentiates EGR2-mediated transcriptional activation activity from the ERBB2 promoter. Acts as an inhibitor of osteoblastic mineralization through a cAMP-dependent parathyroid hormone receptor signaling. May play a role in pigmentation of melanocytes. Associates with chromatin to the estrogen-responsive TGF-alpha promoter region in a estrogen-dependent manner. This is Cbp/p300-interacting transactivator 1 (Cited1) from Mus musculus (Mouse).